The primary structure comprises 948 residues: Coiled-coil domain-containing protein 66 (948 aa).

Phosphothreonine occurs at positions 115 and 121. Phosphoserine is present on S369. The disordered stretch occupies residues 458–499 (DRRRQKQLEHQKAITAQVEEKRRKKQLEEEQRKKEEQEEELR). A coiled-coil region spans residues 467-558 (HQKAITAQVE…EQRIRELAQK (92 aa)). Positions 570–948 (GVDTIQMEYN…NQEESFGSSF (379 aa)) are mediates localization to cilia, centrosomes and spindle microtubules and the interaction with PCM1, CEP290, CEP104 and CSPP1. S606 bears the Phosphoserine mark. 2 disordered regions span residues 690–713 (QTKHMKKYPKRPDWNINKPPKRYI) and 788–808 (SFSKERSPSSPVPVVKNRTQQ).

As to quaternary structure, homodimer; disulfide-linked. Interacts with CEP290. Interacts with PCM1. Interacts with ARMC9, TOGARAM1, CSPP1 and CEP104. Interacts with CDK5RAP2, CEP152, CEP192, TBG1 and PRC1. Widely expressed (at protein level). Expressed in retina, mainly in photoreceptors but also in outer plexiform and ganglion cell layers (at protein level).

It localises to the cytoplasm. It is found in the cytoskeleton. Its subcellular location is the microtubule organizing center. The protein localises to the centrosome. The protein resides in the centriolar satellite. It localises to the cell projection. It is found in the cilium. Its subcellular location is the cilium basal body. The protein localises to the cilium axoneme. The protein resides in the photoreceptor inner segment. It localises to the photoreceptor outer segment. It is found in the spindle. Its subcellular location is the midbody. In terms of biological role, microtubule-binding protein required for ciliogenesis. May function in ciliogenesis by mediating the transport of proteins like BBS4 to the cilium, but also through the organization of the centriolar satellites. Required for the assembly of signaling-competent cilia with proper structure and length. Mediates this function in part by regulating transition zone assembly and basal body recruitment of the IFT-B complex. Cooperates with the ciliopathy proteins CSPP1 and CEP104 during cilium length regulation. Plays two important roles during cell division. First, is required for mitotic progression via regulation of spindle assembly, organization and orientation, levels of spindle microtubules (MTs), kinetochore-fiber integrity, and chromosome alignment. Second, functions during cytokinesis in part by regulating assembly and organization of central spindle and midbody MTs. Plays a role in retina morphogenesis and/or homeostasis. This is Coiled-coil domain-containing protein 66 from Homo sapiens (Human).